The following is a 418-amino-acid chain: Phosphopentomutase (418 aa).

Residues Asp10, Asp297, His302, Asp338, His339, and His350 each contribute to the Mn(2+) site.

It belongs to the phosphopentomutase family. The cofactor is Mn(2+).

The protein resides in the cytoplasm. The enzyme catalyses 2-deoxy-alpha-D-ribose 1-phosphate = 2-deoxy-D-ribose 5-phosphate. It catalyses the reaction alpha-D-ribose 1-phosphate = D-ribose 5-phosphate. It functions in the pathway carbohydrate degradation; 2-deoxy-D-ribose 1-phosphate degradation; D-glyceraldehyde 3-phosphate and acetaldehyde from 2-deoxy-alpha-D-ribose 1-phosphate: step 1/2. Isomerase that catalyzes the conversion of deoxy-ribose 1-phosphate (dRib-1-P) and ribose 1-phosphate (Rib-1-P) to deoxy-ribose 5-phosphate (dRib-5-P) and ribose 5-phosphate (Rib-5-P), respectively. The sequence is that of Phosphopentomutase from Chromohalobacter salexigens (strain ATCC BAA-138 / DSM 3043 / CIP 106854 / NCIMB 13768 / 1H11).